Consider the following 298-residue polypeptide: Tyrosine recombinase XerC (298 aa).

Residues 1–84 (MNHIQEAFLN…TLRTFYEYWM (84 aa)) form the Core-binding (CB) domain. The Tyr recombinase domain maps to 105-286 (YLPQFFYEEE…SNQQLRKVYL (182 aa)). Residues arginine 145, lysine 169, histidine 238, arginine 241, and histidine 264 contribute to the active site. The active-site O-(3'-phospho-DNA)-tyrosine intermediate is tyrosine 273.

The protein belongs to the 'phage' integrase family. XerC subfamily. In terms of assembly, forms a cyclic heterotetrameric complex composed of two molecules of XerC and two molecules of XerD.

The protein localises to the cytoplasm. Functionally, site-specific tyrosine recombinase, which acts by catalyzing the cutting and rejoining of the recombining DNA molecules. The XerC-XerD complex is essential to convert dimers of the bacterial chromosome into monomers to permit their segregation at cell division. It also contributes to the segregational stability of plasmids. This is Tyrosine recombinase XerC from Staphylococcus aureus (strain MRSA252).